Reading from the N-terminus, the 399-residue chain is MSDQLILVLNCGSSSLKGAVIDRKSGSVVLSCLGERLTTPEAVITFSKDGNKRQVPLSGRNCHAGAVGMLLNELEKHELHDRIQAVGHRIAHGGEKYSESVLIDQAVMDELNACIPLAPLHNPANISGILAAQEHFPGLPNVGVMDTSFHQTMPERAYTYAVPRELRKKYAFRRYGFHGTSMRYVAPEAACILGKPLEDIRMIIAHLGNGASITAIKNGKSVDTSMGFTPIEGLVMGTRCGDIDPGVYSYLTSHAGLDVAQVDEMLNKKSGLLGISELSNDCRTLEIAADEGHEGARLALEVMTYRLAKYIASMAVGCGGVDALVFTGGIGENSRNIRAKTVSYLDFLGLHIDTKANMEKRYGNSGIISPTDSSPAVLVVPTNEELMIACDTAELVGIL.

Asparagine 10 is a binding site for Mg(2+). Residue lysine 17 participates in ATP binding. Arginine 89 serves as a coordination point for substrate. Aspartate 146 serves as the catalytic Proton donor/acceptor. Residues 206-210 (HLGNG), 281-283 (DCR), and 329-333 (GIGEN) contribute to the ATP site. Glutamate 384 provides a ligand contact to Mg(2+).

The protein belongs to the acetokinase family. Homodimer. Requires Mg(2+) as cofactor. The cofactor is Mn(2+).

It localises to the cytoplasm. It catalyses the reaction acetate + ATP = acetyl phosphate + ADP. It participates in metabolic intermediate biosynthesis; acetyl-CoA biosynthesis; acetyl-CoA from acetate: step 1/2. Catalyzes the formation of acetyl phosphate from acetate and ATP. Can also catalyze the reverse reaction. The polypeptide is Acetate kinase 2 (Neisseria meningitidis serogroup A / serotype 4A (strain DSM 15465 / Z2491)).